The chain runs to 391 residues: 3-ketoacyl-CoA thiolase (391 aa).

Residue C95 is the Acyl-thioester intermediate of the active site. Catalysis depends on proton acceptor residues H347 and C377.

The protein belongs to the thiolase-like superfamily. Thiolase family. Heterotetramer of two alpha chains (FadB) and two beta chains (FadA).

It is found in the cytoplasm. It catalyses the reaction an acyl-CoA + acetyl-CoA = a 3-oxoacyl-CoA + CoA. The protein operates within lipid metabolism; fatty acid beta-oxidation. In terms of biological role, catalyzes the final step of fatty acid oxidation in which acetyl-CoA is released and the CoA ester of a fatty acid two carbons shorter is formed. This is 3-ketoacyl-CoA thiolase from Pseudomonas savastanoi pv. phaseolicola (strain 1448A / Race 6) (Pseudomonas syringae pv. phaseolicola (strain 1448A / Race 6)).